We begin with the raw amino-acid sequence, 333 residues long: Ketol-acid reductoisomerase (NADP(+)) (333 aa).

In terms of domain architecture, KARI N-terminal Rossmann spans 1–171; that stretch reads MSNDTQPKIA…GGARANIIKT (171 aa). NADP(+) contacts are provided by residues 14–17, R37, T42, and 72–75; these read YGSQ and DMVQ. H97 is an active-site residue. G123 lines the NADP(+) pocket. The KARI C-terminal knotted domain occupies 172–317; it reads TFKEETETDL…KKLRAKMVWL (146 aa). The Mg(2+) site is built by D180, E184, E216, and E220. S241 lines the substrate pocket.

This sequence belongs to the ketol-acid reductoisomerase family. Requires Mg(2+) as cofactor.

The enzyme catalyses (2R)-2,3-dihydroxy-3-methylbutanoate + NADP(+) = (2S)-2-acetolactate + NADPH + H(+). The catalysed reaction is (2R,3R)-2,3-dihydroxy-3-methylpentanoate + NADP(+) = (S)-2-ethyl-2-hydroxy-3-oxobutanoate + NADPH + H(+). Its pathway is amino-acid biosynthesis; L-isoleucine biosynthesis; L-isoleucine from 2-oxobutanoate: step 2/4. It participates in amino-acid biosynthesis; L-valine biosynthesis; L-valine from pyruvate: step 2/4. Its function is as follows. Involved in the biosynthesis of branched-chain amino acids (BCAA). Catalyzes an alkyl-migration followed by a ketol-acid reduction of (S)-2-acetolactate (S2AL) to yield (R)-2,3-dihydroxy-isovalerate. In the isomerase reaction, S2AL is rearranged via a Mg-dependent methyl migration to produce 3-hydroxy-3-methyl-2-ketobutyrate (HMKB). In the reductase reaction, this 2-ketoacid undergoes a metal-dependent reduction by NADPH to yield (R)-2,3-dihydroxy-isovalerate. This Xanthomonas euvesicatoria pv. vesicatoria (strain 85-10) (Xanthomonas campestris pv. vesicatoria) protein is Ketol-acid reductoisomerase (NADP(+)).